A 412-amino-acid polypeptide reads, in one-letter code: Serine hydroxymethyltransferase (412 aa).

(6S)-5,6,7,8-tetrahydrofolate is bound by residues Leu-117 and 121 to 123 (GHL). Lys-226 is modified (N6-(pyridoxal phosphate)lysine).

It belongs to the SHMT family. Homodimer. Pyridoxal 5'-phosphate is required as a cofactor.

Its subcellular location is the cytoplasm. It carries out the reaction (6R)-5,10-methylene-5,6,7,8-tetrahydrofolate + glycine + H2O = (6S)-5,6,7,8-tetrahydrofolate + L-serine. The protein operates within one-carbon metabolism; tetrahydrofolate interconversion. It participates in amino-acid biosynthesis; glycine biosynthesis; glycine from L-serine: step 1/1. Functionally, catalyzes the reversible interconversion of serine and glycine with tetrahydrofolate (THF) serving as the one-carbon carrier. This reaction serves as the major source of one-carbon groups required for the biosynthesis of purines, thymidylate, methionine, and other important biomolecules. Also exhibits THF-independent aldolase activity toward beta-hydroxyamino acids, producing glycine and aldehydes, via a retro-aldol mechanism. This chain is Serine hydroxymethyltransferase, found in Staphylococcus epidermidis (strain ATCC 35984 / DSM 28319 / BCRC 17069 / CCUG 31568 / BM 3577 / RP62A).